Here is a 162-residue protein sequence, read N- to C-terminus: D-aminoacyl-tRNA deacylase (162 aa).

The short motif at 145 to 146 (GP) is the Gly-cisPro motif, important for rejection of L-amino acids element.

Belongs to the DTD family. As to quaternary structure, homodimer.

It is found in the cytoplasm. The enzyme catalyses glycyl-tRNA(Ala) + H2O = tRNA(Ala) + glycine + H(+). The catalysed reaction is a D-aminoacyl-tRNA + H2O = a tRNA + a D-alpha-amino acid + H(+). Its function is as follows. An aminoacyl-tRNA editing enzyme that deacylates mischarged D-aminoacyl-tRNAs. Also deacylates mischarged glycyl-tRNA(Ala), protecting cells against glycine mischarging by AlaRS. Acts via tRNA-based rather than protein-based catalysis; rejects L-amino acids rather than detecting D-amino acids in the active site. By recycling D-aminoacyl-tRNA to D-amino acids and free tRNA molecules, this enzyme counteracts the toxicity associated with the formation of D-aminoacyl-tRNA entities in vivo and helps enforce protein L-homochirality. The sequence is that of D-aminoacyl-tRNA deacylase from Bifidobacterium longum subsp. infantis (strain ATCC 15697 / DSM 20088 / JCM 1222 / NCTC 11817 / S12).